We begin with the raw amino-acid sequence, 350 residues long: D-alanine--D-alanine ligase (350 aa).

The ATP-grasp domain maps to 138 to 346 (KSAFSSAGLS…LEQLVHKLIQ (209 aa)). 173 to 228 (ERELNYPCFVKPANLGSSVGISKVRSRQELEAGLEQAAALDPRLVVEQGVNAREVE) provides a ligand contact to ATP. Mg(2+) contacts are provided by Asp299, Glu313, and Asn315.

The protein belongs to the D-alanine--D-alanine ligase family. It depends on Mg(2+) as a cofactor. Mn(2+) is required as a cofactor.

The protein localises to the cytoplasm. It carries out the reaction 2 D-alanine + ATP = D-alanyl-D-alanine + ADP + phosphate + H(+). Its pathway is cell wall biogenesis; peptidoglycan biosynthesis. Functionally, cell wall formation. In Synechococcus sp. (strain CC9605), this protein is D-alanine--D-alanine ligase.